A 343-amino-acid polypeptide reads, in one-letter code: Methylthioribose-1-phosphate isomerase (343 aa).

Substrate is bound by residues 48–50, arginine 88, and glutamine 193; that span reads RGA. Catalysis depends on aspartate 234, which acts as the Proton donor. 244-245 is a substrate binding site; the sequence is NK.

It belongs to the eIF-2B alpha/beta/delta subunits family. MtnA subfamily.

The enzyme catalyses 5-(methylsulfanyl)-alpha-D-ribose 1-phosphate = 5-(methylsulfanyl)-D-ribulose 1-phosphate. It functions in the pathway amino-acid biosynthesis; L-methionine biosynthesis via salvage pathway; L-methionine from S-methyl-5-thio-alpha-D-ribose 1-phosphate: step 1/6. Its function is as follows. Catalyzes the interconversion of methylthioribose-1-phosphate (MTR-1-P) into methylthioribulose-1-phosphate (MTRu-1-P). This chain is Methylthioribose-1-phosphate isomerase, found in Thermotoga neapolitana (strain ATCC 49049 / DSM 4359 / NBRC 107923 / NS-E).